The following is a 346-amino-acid chain: Phosphoribosylformylglycinamidine cyclo-ligase (346 aa).

Belongs to the AIR synthase family.

Its subcellular location is the cytoplasm. It catalyses the reaction 2-formamido-N(1)-(5-O-phospho-beta-D-ribosyl)acetamidine + ATP = 5-amino-1-(5-phospho-beta-D-ribosyl)imidazole + ADP + phosphate + H(+). It functions in the pathway purine metabolism; IMP biosynthesis via de novo pathway; 5-amino-1-(5-phospho-D-ribosyl)imidazole from N(2)-formyl-N(1)-(5-phospho-D-ribosyl)glycinamide: step 2/2. This chain is Phosphoribosylformylglycinamidine cyclo-ligase, found in Bacillus cereus (strain ZK / E33L).